A 160-amino-acid polypeptide reads, in one-letter code: Ribosomal RNA large subunit methyltransferase H (160 aa).

S-adenosyl-L-methionine is bound by residues Leu-76, Gly-108, and 127–132 (LGKMTW).

It belongs to the RNA methyltransferase RlmH family. In terms of assembly, homodimer.

The protein localises to the cytoplasm. It carries out the reaction pseudouridine(1915) in 23S rRNA + S-adenosyl-L-methionine = N(3)-methylpseudouridine(1915) in 23S rRNA + S-adenosyl-L-homocysteine + H(+). Its function is as follows. Specifically methylates the pseudouridine at position 1915 (m3Psi1915) in 23S rRNA. This is Ribosomal RNA large subunit methyltransferase H from Rhizobium johnstonii (strain DSM 114642 / LMG 32736 / 3841) (Rhizobium leguminosarum bv. viciae).